A 453-amino-acid chain; its full sequence is Prenyltransferase nscD (453 aa).

Arg118, Lys200, Tyr202, Lys271, Tyr273, and Tyr428 together coordinate dimethylallyl diphosphate.

The protein belongs to the tryptophan dimethylallyltransferase family.

Its pathway is secondary metabolite biosynthesis. Functionally, prenyltransferase; part of the gene cluster that mediates the biosynthesis of neosartoricin, a prenylated anthracenone that exhibits T-cell antiproliferative activity, suggestive of a physiological role as an immunosuppressive agent. The non-reducing polyketide synthase nscA probably synthesizes and cyclizes the decaketide backbone. The hydrolase nscB then mediates the product release through hydrolysis followed by spontaneous decarboxylation. The prenyltransferase nscD catalyzes the addition of the dimethylallyl group to the aromatic C5. The FAD-dependent monooxygenase nscC is then responsible for the stereospecific hydroxylation at C2. There is no gene encoding O-acetyltransferase in the nsc gene cluster; thus, the last step of 2-O-acetylation leading to neosartoricin may be catalyzed by an unidentified O-acetyltransferase. This Aspergillus fumigatus (strain ATCC MYA-4609 / CBS 101355 / FGSC A1100 / Af293) (Neosartorya fumigata) protein is Prenyltransferase nscD.